A 270-amino-acid polypeptide reads, in one-letter code: Putative hydro-lyase H16_B1759 (270 aa).

This sequence belongs to the D-glutamate cyclase family.

The polypeptide is Putative hydro-lyase H16_B1759 (Cupriavidus necator (strain ATCC 17699 / DSM 428 / KCTC 22496 / NCIMB 10442 / H16 / Stanier 337) (Ralstonia eutropha)).